A 552-amino-acid chain; its full sequence is Urocanate hydratase (552 aa).

NAD(+) contacts are provided by residues 49 to 50, Q127, 173 to 175, D193, 239 to 240, 260 to 264, 270 to 271, and Y319; these read GG, GMG, NA, QTSAH, and YI. The active site involves C407. G489 provides a ligand contact to NAD(+).

Belongs to the urocanase family. NAD(+) is required as a cofactor.

The protein resides in the cytoplasm. It catalyses the reaction 4-imidazolone-5-propanoate = trans-urocanate + H2O. It participates in amino-acid degradation; L-histidine degradation into L-glutamate; N-formimidoyl-L-glutamate from L-histidine: step 2/3. Functionally, catalyzes the conversion of urocanate to 4-imidazolone-5-propionate. The chain is Urocanate hydratase from Bacillus cereus (strain ATCC 10987 / NRS 248).